We begin with the raw amino-acid sequence, 116 residues long: UPF0499 protein ATEG_06693 (116 aa).

The signal sequence occupies residues 1–18 (MKLTGLLSLALLTTLALA). Cystine bridges form between Cys-32–Cys-46, Cys-36–Cys-49, and Cys-42–Cys-54.

This sequence belongs to the UPF0499 family.

Its subcellular location is the secreted. The sequence is that of UPF0499 protein ATEG_06693 from Aspergillus terreus (strain NIH 2624 / FGSC A1156).